A 340-amino-acid chain; its full sequence is Formimidoylglutamase (340 aa).

Mn(2+) is bound by residues histidine 129, aspartate 160, histidine 162, aspartate 164, aspartate 257, and aspartate 259.

Belongs to the arginase family. The cofactor is Mn(2+).

It catalyses the reaction N-formimidoyl-L-glutamate + H2O = formamide + L-glutamate. It participates in amino-acid degradation; L-histidine degradation into L-glutamate; L-glutamate from N-formimidoyl-L-glutamate (hydrolase route): step 1/1. Functionally, catalyzes the conversion of N-formimidoyl-L-glutamate to L-glutamate and formamide. This Vibrio parahaemolyticus serotype O3:K6 (strain RIMD 2210633) protein is Formimidoylglutamase.